The sequence spans 503 residues: Sarpagan bridge enzyme 1 (503 aa).

The helical; Signal-anchor for type II membrane protein transmembrane segment at 3 to 23 (ISVTTSIALATIVFFLYKLAT) threads the bilayer. C442 contributes to the heme binding site.

It belongs to the cytochrome P450 family. Requires heme as cofactor. As to expression, highly expressed in roots. Expressed at low levels in leaves, stems and flowers.

It localises to the endoplasmic reticulum membrane. It carries out the reaction (19E)-geissoschizine + reduced [NADPH--hemoprotein reductase] + O2 = polyneuridine aldehyde + oxidized [NADPH--hemoprotein reductase] + 2 H2O + H(+). The catalysed reaction is tetrahydroalstonine + A + reduced [NADPH--hemoprotein reductase] + O2 = alstonine + AH2 + oxidized [NADPH--hemoprotein reductase] + 2 H2O + H(+). It catalyses the reaction ajmalicine + A + reduced [NADPH--hemoprotein reductase] + O2 = serpentine + AH2 + oxidized [NADPH--hemoprotein reductase] + 2 H2O + H(+). It participates in alkaloid biosynthesis; ajmaline biosynthesis. Monooxygenase involved in the biosynthesis of ajmaline-type monoterpenoid indole alkaloids (MIAs) natural products, important plant-derived pharmaceuticals used in the therapy of heart disorders. Converts by cyclization the strictosidine-derived geissoschizine to the sarpagan alkaloid polyneuridine aldehyde, precursor of vomilenine, an intermediate chemical in the biosynthesis of ajmaline. Converts by aromatization the tetrahydro-beta-carboline alkaloids tetrahydroalstonine and ajmalicine to the corresponding beta-carboline alkaloids alstonine and serpentine, respectively. This is Sarpagan bridge enzyme 1 from Rauvolfia serpentina (Serpentine wood).